The following is a 1048-amino-acid chain: Dyslexia-associated protein KIAA0319-like protein (1048 aa).

Residues 1-29 (MEKRLGVKPSPASWVLPGYCWQTSVKLPR) are Cytoplasmic-facing. A helical transmembrane segment spans residues 30-50 (SLYLLYSFFCFSVLWLSTDAD). Residues 49–127 (ADESRCQQGK…PFRTDSSNSM (79 aa)) enclose the MANSC domain. The Extracellular portion of the chain corresponds to 51–928 (ESRCQQGKTL…RDGDSNCEWS (878 aa)). 2 disordered regions span residues 198–218 (HGAM…LSPT) and 231–300 (SFTS…STSA). The span at 231–241 (SFTSNHTTQTP) shows a compositional bias: polar residues. Residue asparagine 246 is glycosylated (N-linked (GlcNAc...) asparagine). Low complexity-rich tracts occupy residues 247–261 (VSIH…SPVS) and 287–300 (ATPT…STSA). PKD domains are found at residues 309–400 (VVSA…VKPE), 408–497 (VAVV…VNKA), 503–593 (VANA…VQPE), 599–687 (QADA…VKEE), and 693–784 (VAKI…VKPD). Residue asparagine 394 is glycosylated (N-linked (GlcNAc...) asparagine). The tract at residues 593–623 (ENNKPPQADAGPDKELTLPVDSTTLDGSKST) is disordered. Residues 929 to 949 (VLYVIIASFVIVVALGILSWT) traverse the membrane as a helical segment. Over 950-1048 (TICCCKRQKG…KSRSAREEIL (99 aa)) the chain is Cytoplasmic. Threonine 973 bears the Phosphothreonine mark. Serine 977 bears the Phosphoserine mark. The tract at residues 980-1007 (LKPTSRAGSKQKGPTLSSSLMHSESELD) is disordered. Positions 985-994 (RAGSKQKGPT) are enriched in polar residues. Phosphoserine occurs at positions 1008 and 1030. The segment at 1024-1048 (LYGQNGSVPNGQTPLKSRSAREEIL) is disordered. Residues 1027–1039 (QNGSVPNGQTPLK) show a composition bias toward polar residues. Phosphothreonine is present on threonine 1036.

In terms of assembly, interacts with RTN4R. N-glycosylated.

The protein localises to the cytoplasmic granule membrane. It localises to the golgi apparatus membrane. It is found in the golgi apparatus. Its subcellular location is the trans-Golgi network membrane. The protein resides in the cell membrane. Possible role in axon guidance through interaction with RTN4R. Functionally, (Microbial infection) Acts as a receptor for adeno-associated virus and is involved in adeno-associated virus infection through endocytosis system. The chain is Dyslexia-associated protein KIAA0319-like protein from Mus musculus (Mouse).